Reading from the N-terminus, the 151-residue chain is Regulatory protein RecX (151 aa).

This sequence belongs to the RecX family.

It localises to the cytoplasm. Modulates RecA activity. This chain is Regulatory protein RecX, found in Prosthecochloris aestuarii (strain DSM 271 / SK 413).